The primary structure comprises 142 residues: Transcriptional regulator MraZ (142 aa).

2 consecutive SpoVT-AbrB domains span residues Glu5–Glu47 and Ala76–Lys119.

Belongs to the MraZ family. In terms of assembly, forms oligomers.

The protein resides in the cytoplasm. Its subcellular location is the nucleoid. The chain is Transcriptional regulator MraZ from Clostridium botulinum (strain Alaska E43 / Type E3).